A 291-amino-acid polypeptide reads, in one-letter code: NAD kinase (291 aa).

Asp-73 serves as the catalytic Proton acceptor. NAD(+)-binding positions include Asp-73 to Gly-74, Asn-147 to Asp-148, Arg-175, Asp-177, Thr-188 to Ser-193, Ala-212, and Gln-246.

It belongs to the NAD kinase family. A divalent metal cation is required as a cofactor.

It localises to the cytoplasm. The enzyme catalyses NAD(+) + ATP = ADP + NADP(+) + H(+). In terms of biological role, involved in the regulation of the intracellular balance of NAD and NADP, and is a key enzyme in the biosynthesis of NADP. Catalyzes specifically the phosphorylation on 2'-hydroxyl of the adenosine moiety of NAD to yield NADP. The chain is NAD kinase from Polaromonas naphthalenivorans (strain CJ2).